Consider the following 512-residue polypeptide: MEELQGYLKKDRSPQQHFLYPLLLQEYIYTLAHDDSLNGSIFYEPIEFIGYDNKFSLVLVKRLIIRMYQQNFLIYLVNDSNQNRFGGHTNYFYSHFFYSQMVSKGFSVIVEIPFSRRLVSSSEEKEIPKSQNLGSIHSIFPFLEDKLSHLNNVSDILIPHPIHFEILVQILQCWIQDVPSLHLLRFFLHKYQNLNKTIQSNKTIYVFSKENKRLFWFLYNSYVSECEFLLVFFHKQSCYLRSTSSGAFLERSHFYGKMEHIIIVCCNNFHKTLWPIKDPLIHYVRYQGKAILASRGNHLLMKEWRYYFVNFWQYYFHFWSQPYRMHINSLLNYSFYFMGYLLRVLINPYAVKNQMLENSFLIDTVIKKFDTIIPIIPLIGSLSKAKFCTFSGHPISKPIWADLSDFDIIDRFGRICRNLSHYYSGSSKKQSLYRIKYILRLSCARTLARKHKSTARALLQRLGLGFLEEFFTEEEQVLSFIFPKTTLFTLHGSHRERIWSLDIIRINDLVNN.

This sequence belongs to the intron maturase 2 family. MatK subfamily.

It is found in the plastid. The protein localises to the chloroplast. Functionally, usually encoded in the trnK tRNA gene intron. Probably assists in splicing its own and other chloroplast group II introns. The sequence is that of Maturase K from Lilium tsingtauense (Twilight lily).